Reading from the N-terminus, the 486-residue chain is Ribulose bisphosphate carboxylase large chain (486 aa).

Substrate is bound by residues N126 and T176. The Proton acceptor role is filled by K178. Substrate is bound at residue K180. Residues K204, D206, and E207 each coordinate Mg(2+). The residue at position 204 (K204) is an N6-carboxylysine. H296 functions as the Proton acceptor in the catalytic mechanism. Substrate is bound by residues R297, H329, and S381.

It belongs to the RuBisCO large chain family. Type I subfamily. As to quaternary structure, heterohexadecamer of 8 large chains and 8 small chains. Requires Mg(2+) as cofactor.

It catalyses the reaction 2 (2R)-3-phosphoglycerate + 2 H(+) = D-ribulose 1,5-bisphosphate + CO2 + H2O. The catalysed reaction is D-ribulose 1,5-bisphosphate + O2 = 2-phosphoglycolate + (2R)-3-phosphoglycerate + 2 H(+). Its function is as follows. RuBisCO catalyzes two reactions: the carboxylation of D-ribulose 1,5-bisphosphate, the primary event in carbon dioxide fixation, as well as the oxidative fragmentation of the pentose substrate. Both reactions occur simultaneously and in competition at the same active site. The polypeptide is Ribulose bisphosphate carboxylase large chain (Sinorhizobium medicae (strain WSM419) (Ensifer medicae)).